Here is a 240-residue protein sequence, read N- to C-terminus: Coatomer subunit delta (240 aa).

Over residues 215-226 the composition is skewed to low complexity; sequence AAAKASSAPKAK. The tract at residues 215–240 is disordered; sequence AAAKASSAPKAKGMQLGKKKNTSLLY. The segment covering 231 to 240 has biased composition (basic residues); it reads GKKKNTSLLY.

The protein belongs to the adaptor complexes medium subunit family. Delta-COP subfamily. Oligomeric complex that consists of at least the alpha, beta, beta', gamma, delta, epsilon and zeta subunits.

It is found in the cytoplasm. The protein localises to the nucleus. The coatomer is a cytosolic protein complex that binds to dilysine motifs and reversibly associates with Golgi non-clathrin-coated vesicles, which further mediate biosynthetic protein transport from the ER, via the Golgi up to the trans Golgi network. Coatomer complex is required for budding from Golgi membranes, and is essential for the retrograde Golgi-to-ER transport of dilysine-tagged proteins. The sequence is that of Coatomer subunit delta (ret2) from Schizosaccharomyces pombe (strain 972 / ATCC 24843) (Fission yeast).